The chain runs to 242 residues: tRNA pseudouridine synthase A (242 aa).

The Nucleophile role is filled by Asp-51. Tyr-107 contacts substrate.

This sequence belongs to the tRNA pseudouridine synthase TruA family. As to quaternary structure, homodimer.

The enzyme catalyses uridine(38/39/40) in tRNA = pseudouridine(38/39/40) in tRNA. Its function is as follows. Formation of pseudouridine at positions 38, 39 and 40 in the anticodon stem and loop of transfer RNAs. The sequence is that of tRNA pseudouridine synthase A from Helicobacter acinonychis (strain Sheeba).